Consider the following 195-residue polypeptide: Exosome complex component CSL4 (195 aa).

A Phosphoserine modification is found at S21. Positions 66 to 147 (DVGAVVTCKV…AQSNYLLTTA (82 aa)) constitute an S1 motif domain.

Belongs to the CSL4 family. As to quaternary structure, component of the RNA exosome core complex (Exo-9), composed of EXOSC1, EXOSC2, EXOSC3, EXOSC4, EXOSC5, EXOSC6, EXOSC7, EXOSC8 and EXOSC9; within the complex interacts with EXOSC6. The catalytically inactive RNA exosome core complex (Exo-9) associates with the catalytic subunit EXOSC10/RRP6. Exo-9 may associate with DIS3 to form the nucleolar exosome complex, or DIS3L to form the cytoplasmic exosome complex. Exo-9 is formed by a hexameric base ring consisting of the heterodimers EXOSC4-EXOSC9, EXOSC5-EXOSC8 and EXOSC6-EXOSC7, and a cap ring consisting of EXOSC1, EXOSC2 and EXOSC3. The RNA exosome complex associates with cofactors C1D/RRP47, MPHOSPH6/MPP6 and MTREX/MTR4. Interacts with DDX60.

The protein resides in the nucleus. The protein localises to the nucleolus. It is found in the cytoplasm. Functionally, non-catalytic component of the RNA exosome complex which has 3'-&gt;5' exoribonuclease activity and participates in a multitude of cellular RNA processing and degradation events. In the nucleus, the RNA exosome complex is involved in proper maturation of stable RNA species such as rRNA, snRNA and snoRNA, in the elimination of RNA processing by-products and non-coding 'pervasive' transcripts, such as antisense RNA species and promoter-upstream transcripts (PROMPTs), and of mRNAs with processing defects, thereby limiting or excluding their export to the cytoplasm. The RNA exosome may be involved in Ig class switch recombination (CSR) and/or Ig variable region somatic hypermutation (SHM) by targeting AICDA deamination activity to transcribed dsDNA substrates. In the cytoplasm, the RNA exosome complex is involved in general mRNA turnover and specifically degrades inherently unstable mRNAs containing AU-rich elements (AREs) within their 3' untranslated regions, and in RNA surveillance pathways, preventing translation of aberrant mRNAs. It seems to be involved in degradation of histone mRNA. The catalytic inactive RNA exosome core complex of 9 subunits (Exo-9) is proposed to play a pivotal role in the binding and presentation of RNA for ribonucleolysis, and to serve as a scaffold for the association with catalytic subunits and accessory proteins or complexes. EXOSC1 as peripheral part of the Exo-9 complex stabilizes the hexameric ring of RNase PH-domain subunits through contacts with EXOSC6 and EXOSC8. The sequence is that of Exosome complex component CSL4 (Exosc1) from Mus musculus (Mouse).